We begin with the raw amino-acid sequence, 264 residues long: Carbonic anhydrase (264 aa).

The segment at residues 1–33 is a signal peptide (tat-type signal); that stretch reads MSSTLYRRQLLKLLGMSVLGTSFSSCVTSPARA. The region spanning 36-264 is the Alpha-carbonic anhydrase domain; sequence VNWGYIGKVG…LNDRLVIEAI (229 aa). Positions 127, 129, and 146 each coordinate Zn(2+). Residue 214–215 participates in substrate binding; it reads TT.

The protein belongs to the alpha-carbonic anhydrase family. It depends on Zn(2+) as a cofactor. Predicted to be exported by the Tat system. The position of the signal peptide cleavage has not been experimentally proven.

It carries out the reaction hydrogencarbonate + H(+) = CO2 + H2O. Reversible hydration of carbon dioxide. This Nostoc sp. (strain PCC 7120 / SAG 25.82 / UTEX 2576) protein is Carbonic anhydrase (ecaA).